Reading from the N-terminus, the 617-residue chain is Chaperone protein HscA homolog (617 aa).

The protein belongs to the heat shock protein 70 family.

Functionally, chaperone involved in the maturation of iron-sulfur cluster-containing proteins. Has a low intrinsic ATPase activity which is markedly stimulated by HscB. The polypeptide is Chaperone protein HscA homolog (Aliivibrio salmonicida (strain LFI1238) (Vibrio salmonicida (strain LFI1238))).